The chain runs to 422 residues: Kynurenine--oxoglutarate transaminase 1 (422 aa).

Residues Gly36 and Asn185 each coordinate substrate. Lys247 is modified (N6-(pyridoxal phosphate)lysine). Arg398 lines the substrate pocket.

Belongs to the class-I pyridoxal-phosphate-dependent aminotransferase family. As to quaternary structure, homodimer. It depends on pyridoxal 5'-phosphate as a cofactor.

It is found in the cytoplasm. The protein resides in the cytosol. The enzyme catalyses L-kynurenine + 2-oxoglutarate = kynurenate + L-glutamate + H2O. It catalyses the reaction 3-phenylpyruvate + L-glutamine = 2-oxoglutaramate + L-phenylalanine. It carries out the reaction an S-substituted L-cysteine + H2O = a thiol + pyruvate + NH4(+). Its pathway is amino-acid degradation; L-kynurenine degradation; kynurenate from L-kynurenine: step 1/2. Inhibited by tryptophan, indole-3-pyruvic acid, 3-indolepropionic acid, DL-indole-3-lactic acid, indole-3-acetic acid (IAC), amino-oxyacetate (AOAA), aminooxy-phenylpropionic acid (AOPP) and Tris. In terms of biological role, catalyzes the irreversible transamination of the L-tryptophan metabolite L-kynurenine to form kynurenic acid (KA), an intermediate in the tryptophan catabolic pathway which is also a broad spectrum antagonist of the three ionotropic excitatory amino acid receptors among others. Also metabolizes the cysteine conjugates of certain halogenated alkenes and alkanes to form reactive metabolites. Catalyzes the beta-elimination of S-conjugates and Se-conjugates of L-(seleno)cysteine, resulting in the cleavage of the C-S or C-Se bond. In Homo sapiens (Human), this protein is Kynurenine--oxoglutarate transaminase 1.